Consider the following 610-residue polypeptide: Glutamine--fructose-6-phosphate aminotransferase [isomerizing] (610 aa).

Catalysis depends on Cys2, which acts as the Nucleophile; for GATase activity. The Glutamine amidotransferase type-2 domain maps to 2–219 (CGIVGYAGKK…SGEWGYFSQN (218 aa)). SIS domains lie at 287–431 (SKDV…SDEE) and 459–600 (MSSH…PDQP). Catalysis depends on Lys605, which acts as the For Fru-6P isomerization activity.

As to quaternary structure, homodimer.

The protein resides in the cytoplasm. It carries out the reaction D-fructose 6-phosphate + L-glutamine = D-glucosamine 6-phosphate + L-glutamate. In terms of biological role, catalyzes the first step in hexosamine metabolism, converting fructose-6P into glucosamine-6P using glutamine as a nitrogen source. In Leptospira interrogans serogroup Icterohaemorrhagiae serovar copenhageni (strain Fiocruz L1-130), this protein is Glutamine--fructose-6-phosphate aminotransferase [isomerizing].